A 230-amino-acid chain; its full sequence is Flagellar L-ring protein (230 aa).

The N-terminal stretch at 1–21 (MMLKTVLRLPVCAALLALAAG) is a signal peptide. Cys22 carries the N-palmitoyl cysteine lipid modification. A lipid anchor (S-diacylglycerol cysteine) is attached at Cys22. The disordered stretch occupies residues 34–53 (PLTAPPPPPPQPSARPNGSI). The segment covering 36–46 (TAPPPPPPQPS) has biased composition (pro residues).

The protein belongs to the FlgH family. The basal body constitutes a major portion of the flagellar organelle and consists of four rings (L,P,S, and M) mounted on a central rod.

It localises to the cell outer membrane. Its subcellular location is the bacterial flagellum basal body. Functionally, assembles around the rod to form the L-ring and probably protects the motor/basal body from shearing forces during rotation. This Bordetella bronchiseptica (strain ATCC BAA-588 / NCTC 13252 / RB50) (Alcaligenes bronchisepticus) protein is Flagellar L-ring protein.